The chain runs to 1488 residues: Chromosome partition protein MukB (1488 aa).

34-41 (GGNGAGKS) is an ATP binding site. Coiled-coil stretches lie at residues 326-413 (LEAD…QTRA), 444-472 (LDTFQAKEQEATEKLLSLEQKMSVAQTAH), and 509-602 (RHLA…RRAP). The flexible hinge stretch occupies residues 666–783 (PGGAEDQRLN…SLPIFGRAAR (118 aa)). Coiled coils occupy residues 835–923 (EAEI…AKLE), 977–1116 (EMLS…AKAG), and 1209–1265 (VEAI…LQSV).

Belongs to the SMC family. MukB subfamily. Homodimerization via its hinge domain. Binds to DNA via its C-terminal region. Interacts, and probably forms a ternary complex, with MukE and MukF via its C-terminal region. The complex formation is stimulated by calcium or magnesium. Interacts with tubulin-related protein FtsZ.

The protein localises to the cytoplasm. Its subcellular location is the nucleoid. In terms of biological role, plays a central role in chromosome condensation, segregation and cell cycle progression. Functions as a homodimer, which is essential for chromosome partition. Involved in negative DNA supercoiling in vivo, and by this means organize and compact chromosomes. May achieve or facilitate chromosome segregation by condensation DNA from both sides of a centrally located replisome during cell division. The sequence is that of Chromosome partition protein MukB from Salmonella paratyphi C (strain RKS4594).